A 1446-amino-acid polypeptide reads, in one-letter code: ABC transporter G family member 53 (1446 aa).

The region spanning 153–426 (ANTLHITPNR…FESVGFKCPE (274 aa)) is the ABC transporter 1 domain. 186-193 (GPPGAGKT) serves as a coordination point for ATP. The ABC transmembrane type-2 1 domain maps to 504–717 (ELLKANIDRE…AQNAISVNEF (214 aa)). Transmembrane regions (helical) follow at residues 523–543 (VYIF…TVFI), 555–575 (GGIY…NGLA), 610–630 (TPLS…VIGF), 641–661 (FLLL…IAGF), 666–686 (VVAS…GGFI), and 752–772 (IGVG…TICL). The region spanning 849–1101 (ITFEDIRYSV…ELIRYFESIE (253 aa)) is the ABC transporter 2 domain. Residue 894–901 (GVSGAGKT) participates in ATP binding. In terms of domain architecture, ABC transmembrane type-2 2 spans 1174–1388 (TQCLACLWKQ…TLYGLVTSQF (215 aa)). 7 helical membrane-spanning segments follow: residues 1195-1215 (AVKY…FWGV), 1225-1242 (LFNA…MGVQ), 1281-1301 (LPYI…MIGF), 1308-1328 (FFWY…YGMM), 1338-1358 (VASV…GFII), 1363-1383 (IPIW…LYGL), and 1415-1435 (FLWV…FLFG).

It belongs to the ABC transporter superfamily. ABCG family. PDR (TC 3.A.1.205) subfamily.

It localises to the membrane. In terms of biological role, may be a general defense protein. In Oryza sativa subsp. japonica (Rice), this protein is ABC transporter G family member 53.